Here is a 1755-residue protein sequence, read N- to C-terminus: Transposon Ty1-NL1 Gag-Pol polyprotein (1755 aa).

Composition is skewed to polar residues over residues 1-23 (MESQ…SVTS), 48-60 (TKAN…TPAS), 71-86 (SPQT…GPYQ), and 131-152 (PQYP…GNTF). Disordered regions lie at residues 1–86 (MESQ…GPYQ), 131–171 (PQYP…YVRP), and 350–420 (QQES…IRGS). Low complexity predominate over residues 153–165 (TDSSSADSDMTST). The segment at 299–401 (NNGIPINNKV…NSQSRTARAH (103 aa)) is RNA-binding. A compositionally biased stretch (basic and acidic residues) spans 363 to 372 (NPSDEKKDSR). Polar residues predominate over residues 373 to 412 (TYTNTTKPKSITRNSQKPNNSQSRTARAHNVSTSNNSSGP). The active-site For protease activity; shared with dimeric partner is aspartate 461. An integrase-type zinc finger-like region spans residues 583 to 640 (NVHTSESTRKYPYPFIHRMLAHANAQTIRYSLKNNTITYFNESDVDWSSAIDYQCPDC). One can recognise an Integrase catalytic domain in the interval 660 to 835 (NSYEPFQYLH…AGLDISTLLP (176 aa)). Positions 671 and 736 each coordinate Mg(2+). 2 disordered regions span residues 956–1120 (SKAV…TCPK) and 1146–1172 (DSFK…SNAY). Residues 960–969 (SPTDSTPPST) show a composition bias toward low complexity. Polar residues predominate over residues 1005 to 1015 (STPQISDIEST). Over residues 1038-1053 (ESSHTSKSKDFRHSDS) the composition is skewed to basic and acidic residues. Polar residues-rich tracts occupy residues 1054-1082 (YSDN…QTSE) and 1095-1106 (SIDTSSSESNSL). Positions 1178–1212 (KKRSLEDNETEIKVSRDTWNTKNMRSLEPPRSKKR) match the Bipartite nuclear localization signal motif. In terms of domain architecture, Reverse transcriptase Ty1/copia-type spans 1338–1476 (NNYYITQLDI…DILGLEIKYQ (139 aa)). Mg(2+)-binding residues include aspartate 1346, aspartate 1427, aspartate 1428, aspartate 1610, glutamate 1652, and aspartate 1685. Residues 1610–1752 (DASYGNQPYY…IKTFKLLTNK (143 aa)) form the RNase H Ty1/copia-type domain.

In terms of assembly, the capsid protein forms a homotrimer, from which the VLPs are assembled. The protease is a homodimer, whose active site consists of two apposed aspartic acid residues. Post-translationally, initially, virus-like particles (VLPs) are composed of the structural unprocessed proteins Gag and Gag-Pol, and also contain the host initiator methionine tRNA (tRNA(i)-Met) which serves as a primer for minus-strand DNA synthesis, and a dimer of genomic Ty RNA. Processing of the polyproteins occurs within the particle and proceeds by an ordered pathway, called maturation. First, the protease (PR) is released by autocatalytic cleavage of the Gag-Pol polyprotein yielding capsid protein p45 and a Pol-p154 precursor protein. This cleavage is a prerequisite for subsequent processing of Pol-p154 at the remaining sites to release the mature structural and catalytic proteins. Maturation takes place prior to the RT reaction and is required to produce transposition-competent VLPs.

The protein localises to the cytoplasm. It localises to the nucleus. The catalysed reaction is DNA(n) + a 2'-deoxyribonucleoside 5'-triphosphate = DNA(n+1) + diphosphate. It carries out the reaction Endonucleolytic cleavage to 5'-phosphomonoester.. Capsid protein (CA) is the structural component of the virus-like particle (VLP), forming the shell that encapsulates the retrotransposons dimeric RNA genome. The particles are assembled from trimer-clustered units and there are holes in the capsid shells that allow for the diffusion of macromolecules. CA also has nucleocapsid-like chaperone activity, promoting primer tRNA(i)-Met annealing to the multipartite primer-binding site (PBS), dimerization of Ty1 RNA and initiation of reverse transcription. Functionally, the aspartyl protease (PR) mediates the proteolytic cleavages of the Gag and Gag-Pol polyproteins after assembly of the VLP. Its function is as follows. Reverse transcriptase/ribonuclease H (RT) is a multifunctional enzyme that catalyzes the conversion of the retro-elements RNA genome into dsDNA within the VLP. The enzyme displays a DNA polymerase activity that can copy either DNA or RNA templates, and a ribonuclease H (RNase H) activity that cleaves the RNA strand of RNA-DNA heteroduplexes during plus-strand synthesis and hydrolyzes RNA primers. The conversion leads to a linear dsDNA copy of the retrotransposon that includes long terminal repeats (LTRs) at both ends. In terms of biological role, integrase (IN) targets the VLP to the nucleus, where a subparticle preintegration complex (PIC) containing at least integrase and the newly synthesized dsDNA copy of the retrotransposon must transit the nuclear membrane. Once in the nucleus, integrase performs the integration of the dsDNA into the host genome. This chain is Transposon Ty1-NL1 Gag-Pol polyprotein (TY1B-NL1), found in Saccharomyces cerevisiae (strain ATCC 204508 / S288c) (Baker's yeast).